Consider the following 152-residue polypeptide: Transcriptional regulator MraZ (152 aa).

2 SpoVT-AbrB domains span residues 5–52 and 81–124; these read ASAI…PLKE and ATEC…SDAE.

The protein belongs to the MraZ family. Forms oligomers.

It localises to the cytoplasm. The protein resides in the nucleoid. This Pasteurella multocida (strain Pm70) protein is Transcriptional regulator MraZ.